The following is an 89-amino-acid chain: MSEQVEKVRRALIGRVVSDKMQKTVTVLVERRVKHPLYGKIITRSAKYHAHVEDGGAGEGDLVEIEECRPISRTKTWRVTRVVEKARVI.

The protein belongs to the universal ribosomal protein uS17 family. Part of the 30S ribosomal subunit.

In terms of biological role, one of the primary rRNA binding proteins, it binds specifically to the 5'-end of 16S ribosomal RNA. The protein is Small ribosomal subunit protein uS17 of Azoarcus sp. (strain BH72).